The sequence spans 312 residues: MKSDKPFLERYFYDPTLLQKGLIFALYPFSLIYQCIATIKRKTAKKHDFKIPIISIGNLIAGGSGKTPFILEIAPRYQEVAVVSRGYQRDSKGLVVVSVKGNILVPQKTAGDEAYLLALNLKQASVIVSEKRELGVLKALELGSKIVFLDDGFRFNFNQFNALLKPKVPPYYPFCLPSGLYRENIKSYKEAHLVITEDKDYQRITSITNPTKRMLLVTAIANPSRLDAFLPKEVVKKLYFRDHAPFDLKLLEKEFYQNNATSLLVTSKDLVKLQDCKLPLSVLDLKLEICPKVLEEIDRYILSYPCNIKEHL.

Residue 60-67 (IAGGSGKT) participates in ATP binding.

It belongs to the LpxK family.

It catalyses the reaction a lipid A disaccharide + ATP = a lipid IVA + ADP + H(+). It participates in glycolipid biosynthesis; lipid IV(A) biosynthesis; lipid IV(A) from (3R)-3-hydroxytetradecanoyl-[acyl-carrier-protein] and UDP-N-acetyl-alpha-D-glucosamine: step 6/6. Functionally, transfers the gamma-phosphate of ATP to the 4'-position of a tetraacyldisaccharide 1-phosphate intermediate (termed DS-1-P) to form tetraacyldisaccharide 1,4'-bis-phosphate (lipid IVA). This is Tetraacyldisaccharide 4'-kinase from Helicobacter pylori (strain J99 / ATCC 700824) (Campylobacter pylori J99).